Here is a 73-residue protein sequence, read N- to C-terminus: MAKKEGALELEGTVVEALPNAMFRVELKNGHRVLATISGKMRQHYIRILPSDRVVVELSPYDLTRGRIVYRHK.

The S1-like domain occupies 1-73; the sequence is MAKKEGALEL…TRGRIVYRHK (73 aa).

This sequence belongs to the IF-1 family. As to quaternary structure, component of the 30S ribosomal translation pre-initiation complex which assembles on the 30S ribosome in the order IF-2 and IF-3, IF-1 and N-formylmethionyl-tRNA(fMet); mRNA recruitment can occur at any time during PIC assembly.

The protein localises to the cytoplasm. Functionally, one of the essential components for the initiation of protein synthesis. Stabilizes the binding of IF-2 and IF-3 on the 30S subunit to which N-formylmethionyl-tRNA(fMet) subsequently binds. Helps modulate mRNA selection, yielding the 30S pre-initiation complex (PIC). Upon addition of the 50S ribosomal subunit IF-1, IF-2 and IF-3 are released leaving the mature 70S translation initiation complex. The protein is Translation initiation factor IF-1 of Cutibacterium acnes (strain DSM 16379 / KPA171202) (Propionibacterium acnes).